Reading from the N-terminus, the 176-residue chain is Cytochrome b (176 aa).

3 consecutive transmembrane segments (helical) span residues 33 to 53 (FGSL…FLAM), 77 to 98 (WVLR…YLHV), and 113 to 133 (WNVG…GYVL). Residues H83 and H97 each coordinate heme b.

This sequence belongs to the cytochrome b family. In terms of assembly, the cytochrome bc1 complex contains 11 subunits: 3 respiratory subunits (MT-CYB, CYC1 and UQCRFS1), 2 core proteins (UQCRC1 and UQCRC2) and 6 low-molecular weight proteins (UQCRH/QCR6, UQCRB/QCR7, UQCRQ/QCR8, UQCR10/QCR9, UQCR11/QCR10 and a cleavage product of UQCRFS1). This cytochrome bc1 complex then forms a dimer. Requires heme b as cofactor.

The protein resides in the mitochondrion inner membrane. Component of the ubiquinol-cytochrome c reductase complex (complex III or cytochrome b-c1 complex) that is part of the mitochondrial respiratory chain. The b-c1 complex mediates electron transfer from ubiquinol to cytochrome c. Contributes to the generation of a proton gradient across the mitochondrial membrane that is then used for ATP synthesis. This is Cytochrome b (MT-CYB) from Corynorhinus rafinesquii (Rafinesque's big-eared bat).